A 198-amino-acid polypeptide reads, in one-letter code: Segregation and condensation protein B (198 aa).

The tract at residues 168-198 (KLADPATDEPDQNEMDLFFDRFNQSKEQEEE) is disordered.

The protein belongs to the ScpB family. Homodimer. Homodimerization may be required to stabilize the binding of ScpA to the Smc head domains. Component of a cohesin-like complex composed of ScpA, ScpB and the Smc homodimer, in which ScpA and ScpB bind to the head domain of Smc. The presence of the three proteins is required for the association of the complex with DNA.

It localises to the cytoplasm. Its function is as follows. Participates in chromosomal partition during cell division. May act via the formation of a condensin-like complex containing Smc and ScpA that pull DNA away from mid-cell into both cell halves. This chain is Segregation and condensation protein B, found in Listeria monocytogenes serotype 4b (strain CLIP80459).